Consider the following 471-residue polypeptide: MSDAPDPSSAANTMWGGRFAAGPDAIMQAINASIGFDKRLYAQDIRGSRAHAAMLAAQGILTSRDAEAIGEGLLTVLSEIEAGGFPFRVELEDIHMNVEARLKELIGEPAGRLHTARSRNDQVAVDFRLWVRDQCDAAISGIEALMRAFLAQAEAGADWVMPGFTHLQTAQPVTWGHHMLAYVEMLARDRSRFVDARARMNECPLGAAALAGTGFPIDRHMTAAALGFDRPTANSLDSVSDRDFALEFLSASAICALHLSRFAEELVIWSSAQFRFVRLSDRWTTGSSIMPQKKNPDAAELLRAKMGRVLGAAVALFTVMKGLPLTYSKDMQEDKEQVFDAADTLMLGLAAMTGMVGDMQANRESLAAAAASGFSTATDLADWLVRELNLPFRDAHHVTGTLVARAEARGCDLPDLSLAEMQEVHPGIREDVFAVLGVENSVRSRTSYGGTAPDNVRAQAARWKELLGDAA.

Belongs to the lyase 1 family. Argininosuccinate lyase subfamily.

It localises to the cytoplasm. The enzyme catalyses 2-(N(omega)-L-arginino)succinate = fumarate + L-arginine. The protein operates within amino-acid biosynthesis; L-arginine biosynthesis; L-arginine from L-ornithine and carbamoyl phosphate: step 3/3. This is Argininosuccinate lyase from Cereibacter sphaeroides (strain ATCC 17023 / DSM 158 / JCM 6121 / CCUG 31486 / LMG 2827 / NBRC 12203 / NCIMB 8253 / ATH 2.4.1.) (Rhodobacter sphaeroides).